The following is a 272-amino-acid chain: Indole-3-glycerol phosphate synthase (272 aa).

Belongs to the TrpC family.

It carries out the reaction 1-(2-carboxyphenylamino)-1-deoxy-D-ribulose 5-phosphate + H(+) = (1S,2R)-1-C-(indol-3-yl)glycerol 3-phosphate + CO2 + H2O. Its pathway is amino-acid biosynthesis; L-tryptophan biosynthesis; L-tryptophan from chorismate: step 4/5. The polypeptide is Indole-3-glycerol phosphate synthase (Mycolicibacterium vanbaalenii (strain DSM 7251 / JCM 13017 / BCRC 16820 / KCTC 9966 / NRRL B-24157 / PYR-1) (Mycobacterium vanbaalenii)).